The following is a 207-amino-acid chain: N-(5'-phosphoribosyl)anthranilate isomerase (207 aa).

This sequence belongs to the TrpF family.

It catalyses the reaction N-(5-phospho-beta-D-ribosyl)anthranilate = 1-(2-carboxyphenylamino)-1-deoxy-D-ribulose 5-phosphate. It participates in amino-acid biosynthesis; L-tryptophan biosynthesis; L-tryptophan from chorismate: step 3/5. This is N-(5'-phosphoribosyl)anthranilate isomerase from Legionella pneumophila (strain Lens).